The chain runs to 156 residues: MRLQLIAIGTKMPDWVQTGFSDYLKRFPKDLPFDLTEIAAGKRGKNADIARILDKEGEQMLAAVAKGNRIVTLDIPGARWETPRLAQQLERWKQDGRDVSFLIGGPEGLAPACKAGAEQSWSLSPLTLPHPLVRVLVAESLYRAWSITTNHPYHRE.

Residues L73, G104, and 123 to 128 (LSPLTL) each bind S-adenosyl-L-methionine.

Belongs to the RNA methyltransferase RlmH family. As to quaternary structure, homodimer.

The protein resides in the cytoplasm. The enzyme catalyses pseudouridine(1915) in 23S rRNA + S-adenosyl-L-methionine = N(3)-methylpseudouridine(1915) in 23S rRNA + S-adenosyl-L-homocysteine + H(+). Specifically methylates the pseudouridine at position 1915 (m3Psi1915) in 23S rRNA. This Sodalis glossinidius (strain morsitans) protein is Ribosomal RNA large subunit methyltransferase H.